A 350-amino-acid chain; its full sequence is MAAFINSKTNIIDLKNITVLFKNQRKEVRAVDNVNLAVERGDIFGIIGYSGAGKSTLVRTINLLQKPTNGSVIVNGIDIKKIDEKNLRVVRHKIGMIFQHFNLMSSRSVLGNIEYPLLDQKINRKKRQQRALELLKLVGLQEYVSAYPSQLSGGQKQRVAIARALANNPEILISDESTSALDPKTTESILELLKDLNKKLNLTIVLITHEMQVIKSICHNVAVMESGKIIEEGKVTDIFIDPSREVTQDFVDTSTNVKNAIKRIIKNTKFKIPGINQELVYLKFVGQSANEGIISKIVKKFRISFNILFANVDQVDGEDIGHMIIAFSGEDSLIKNHWMHLLKMVFEHKY.

An ABC transporter domain is found at 12–251 (IDLKNITVLF…PSREVTQDFV (240 aa)). 48–55 (GYSGAGKS) lines the ATP pocket.

This sequence belongs to the ABC transporter superfamily. Methionine importer (TC 3.A.1.24) family. As to quaternary structure, the complex is composed of two ATP-binding proteins (MetN), two transmembrane proteins (MetI) and a solute-binding protein (MetQ).

The protein resides in the cell membrane. The catalysed reaction is L-methionine(out) + ATP + H2O = L-methionine(in) + ADP + phosphate + H(+). It catalyses the reaction D-methionine(out) + ATP + H2O = D-methionine(in) + ADP + phosphate + H(+). Part of the ABC transporter complex MetNIQ involved in methionine import. Responsible for energy coupling to the transport system. This is Methionine import ATP-binding protein MetN 1 from Oenococcus oeni (strain ATCC BAA-331 / PSU-1).